The chain runs to 272 residues: Deaminated glutathione amidase (272 aa).

Positions 1-253 (MKPYLAAALQ…PGLAIAEINP (253 aa)) constitute a CN hydrolase domain. The active-site Proton acceptor is glutamate 43. Lysine 115 serves as the catalytic Proton donor. Cysteine 158 (nucleophile) is an active-site residue.

Belongs to the carbon-nitrogen hydrolase superfamily. NIT1/NIT2 family.

It catalyses the reaction N-(4-oxoglutaryl)-L-cysteinylglycine + H2O = L-cysteinylglycine + 2-oxoglutarate. Its function is as follows. Hydrolyzes deaminated glutathione (dGSH, 2-oxoglutaramate) to alpha-ketoglutarate (alpha-KG) and cysteinylglycine (specific activity 7.77 umol/min/mg), hydrolyzes alpha-ketoglutaramate (a-KGM, specific activity 2.13 umol/min/mg), has no activity on glutathione or L-glutamine. May function as a metabolite repair enzyme. The protein is Deaminated glutathione amidase of Synechocystis sp. (strain PCC 6803 / GT-S).